The following is a 102-amino-acid chain: Noncompact myelin-associated protein (102 aa).

Residues 1–30 (MTTATPLGDTTFFSLNMTTRGEDFLYKSSG) are Extracellular-facing. Residues 31–51 (AIVAAVVVVVIIIFTVVLILL) traverse the membrane as a helical segment. The Cytoplasmic portion of the chain corresponds to 52–102 (KMYNRKMRTRRELEPKGPKPTAPSAVGPNSNGSQHPATVTFSPVDVQVETR). The interval 60 to 102 (TRRELEPKGPKPTAPSAVGPNSNGSQHPATVTFSPVDVQVETR) is disordered. Over residues 78-92 (GPNSNGSQHPATVTF) the composition is skewed to polar residues.

Glycosylated.

The protein localises to the cell membrane. Plays a role in myelin formation. This is Noncompact myelin-associated protein (NCMAP) from Homo sapiens (Human).